The sequence spans 290 residues: UPF0761 membrane protein YihY (290 aa).

The Cytoplasmic portion of the chain corresponds to Met1 to Ser43. A helical transmembrane segment spans residues Leu44–Phe64. Residues Ser65 to Ala103 are Periplasmic-facing. A helical transmembrane segment spans residues Val104–Leu124. Residues Asn125–Ser139 are Cytoplasmic-facing. Residues Phe140 to Ile160 traverse the membrane as a helical segment. Over Ser161–Asn179 the chain is Periplasmic. Residues Val180–Val200 form a helical membrane-spanning segment. Residues Pro201 to Asp209 are Cytoplasmic-facing. The chain crosses the membrane as a helical span at residues Ala210–Leu230. At Tyr231 to Gly243 the chain is on the periplasmic side. The chain crosses the membrane as a helical span at residues Val244–Leu264. Residues Gly265–Pro290 are Cytoplasmic-facing.

The protein belongs to the UPF0761 family.

The protein localises to the cell inner membrane. The polypeptide is UPF0761 membrane protein YihY (Salmonella typhimurium (strain LT2 / SGSC1412 / ATCC 700720)).